The sequence spans 833 residues: Serine-rich coiled-coil domain-containing protein 2 (833 aa).

Residues asparagine 178–asparagine 208 are disordered. Over residues serine 191 to asparagine 208 the composition is skewed to polar residues. Position 222 is a phosphoserine (serine 222). 4 disordered regions span residues leucine 321–methionine 345, asparagine 424–proline 452, lysine 478–glycine 508, and aspartate 602–leucine 631. At serine 451 the chain carries Phosphoserine. Low complexity predominate over residues serine 496 to serine 506. Basic residues predominate over residues leucine 606 to histidine 615. Positions aspartate 711–arginine 747 form a coiled coil. The disordered stretch occupies residues phenylalanine 789–glutamine 833. Polar residues predominate over residues threonine 803–glutamine 814.

Belongs to the CCSER family. In terms of tissue distribution, expressed in brain (at protein level).

The protein localises to the cytoplasm. It is found in the cytoskeleton. In terms of biological role, microtubule-binding protein which might play a role in microtubule bundling. In Mus musculus (Mouse), this protein is Serine-rich coiled-coil domain-containing protein 2 (Ccser2).